The sequence spans 1235 residues: Serine/threonine-protein kinase TAO2 (1235 aa).

The residue at position 9 (Ser-9) is a Phosphoserine. The Protein kinase domain occupies 28 to 281 (FSDLREIGHG…SEVLLKHRFV (254 aa)). ATP-binding positions include 34 to 42 (IGHGSFGAV) and Lys-57. The active-site Proton acceptor is Asp-151. Ser-181 is modified (phosphoserine). Residues 318–457 (QEAPNGPGAE…TSTTSSARRR (140 aa)) form a disordered region. The segment covering 350 to 374 (SSHSVPSMSISASSQSSSVNSLADA) has biased composition (low complexity). The segment covering 375 to 393 (SDNEEEEEEEEEEEEEEEG) has biased composition (acidic residues). Over residues 394–409 (PEAREMAMMQEGEHTV) the composition is skewed to basic and acidic residues. Phosphoserine is present on Ser-414. Coiled-coil stretches lie at residues 486–547 (SALR…RRHQ) and 574–601 (KELA…LQEN). Phosphoserine is present on Ser-656. Positions 681–713 (LRQHEATRELELRQLQAVQRTRAELTRLQHQTE) form a coiled coil. Disordered stretches follow at residues 732–777 (HAAQ…QPCS), 804–835 (KEGA…GSLV), and 891–939 (QGPA…RPCP). The span at 766-777 (NTGTPIEQQPCS) shows a compositional bias: polar residues. A phosphoserine mark is found at Ser-777, Ser-825, and Ser-827. A compositionally biased stretch (acidic residues) spans 899-908 (PEEEEEEEEG). Over residues 924-934 (PDIPPEPPPTH) the composition is skewed to pro residues. A run of 2 helical transmembrane segments spans residues 965 to 985 (LLPL…GGGL) and 987 to 1007 (AALL…LLLC). 2 positions are modified to phosphoserine: His-1011 and Gly-1031. Helical transmembrane passes span 1012–1032 (LPSS…VLGL), 1043–1063 (LGLG…LVAM), and 1166–1186 (QGLA…WGLL). Residues 1198-1235 (LPRSQRQLGPPASRQPLPGTLAGRRSRTRQSRALPPWR) are disordered.

The protein belongs to the protein kinase superfamily. STE Ser/Thr protein kinase family. STE20 subfamily. Interacts with MAP2K3 and MAP2K6. Self-associates. Interacts with tubulins through the C-terminal domain. Interacts with MAP3K7 and interferes with MAP3K7-binding to CHUK and thus prevents NF-kappa-B activation. Isoform 2 interacts with PCDH8; this complex may also include CDH2. Mg(2+) serves as cofactor. Isoforms 1 and 2 are autophosphorylated. In terms of processing, C-terminal cleavage of isoform 1 and subsequent nuclear localization requires CASP9 activity. Post-translationally, autophosphorylated. Phosphorylated by ATM. Phosphorylated on Ser-1031 by MAPK14. This phosphorylation is required PCDH8 for endocytosis. Ubiquitously expressed, with a higher level of expression in testis and brain.

The protein localises to the cytoplasmic vesicle membrane. It is found in the cytoplasm. Its subcellular location is the cytoskeleton. The protein resides in the nucleus. It localises to the cell projection. The protein localises to the dendrite. It catalyses the reaction L-seryl-[protein] + ATP = O-phospho-L-seryl-[protein] + ADP + H(+). It carries out the reaction L-threonyl-[protein] + ATP = O-phospho-L-threonyl-[protein] + ADP + H(+). Its activity is regulated as follows. Selectively inhibited by the enantiopure organoruthenium inhibitor 9E1. Activated following arsenic trioxide (As(2)O(3)) treatment. Serine/threonine-protein kinase involved in different processes such as membrane blebbing and apoptotic bodies formation DNA damage response and MAPK14/p38 MAPK stress-activated MAPK cascade. Phosphorylates itself, MBP, activated MAPK8, MAP2K3, MAP2K6 and tubulins. Activates the MAPK14/p38 MAPK signaling pathway through the specific activation and phosphorylation of the upstream MAP2K3 and MAP2K6 kinases. In response to DNA damage, involved in the G2/M transition DNA damage checkpoint by activating the p38/MAPK14 stress-activated MAPK cascade, probably by mediating phosphorylation of upstream MAP2K3 and MAP2K6 kinases. Isoform 1, but not isoform 2, plays a role in apoptotic morphological changes, including cell contraction, membrane blebbing and apoptotic bodies formation. This function, which requires the activation of MAPK8/JNK and nuclear localization of C-terminally truncated isoform 1, may be linked to the mitochondrial CASP9-associated death pathway. Isoform 1 binds to microtubules and affects their organization and stability independently of its kinase activity. Prevents MAP3K7-mediated activation of CHUK, and thus NF-kappa-B activation, but not that of MAPK8/JNK. May play a role in the osmotic stress-MAPK8 pathway. Isoform 2, but not isoform 1, is required for PCDH8 endocytosis. Following homophilic interactions between PCDH8 extracellular domains, isoform 2 phosphorylates and activates MAPK14/p38 MAPK which in turn phosphorylates isoform 2. This process leads to PCDH8 endocytosis and CDH2 cointernalization. Both isoforms are involved in MAPK14 phosphorylation. The protein is Serine/threonine-protein kinase TAO2 (TAOK2) of Homo sapiens (Human).